We begin with the raw amino-acid sequence, 91 residues long: Small ribosomal subunit protein eS24 (91 aa).

The disordered stretch occupies residues 51–91; sequence QRRKDAAAHKEAYNAMPEAERRHLNSEKYANRKAEVSYKHR.

This sequence belongs to the eukaryotic ribosomal protein eS24 family.

The polypeptide is Small ribosomal subunit protein eS24 (Caenorhabditis elegans).